A 554-amino-acid polypeptide reads, in one-letter code: Putative mediator of RNA polymerase II transcription subunit 29 (554 aa).

Disordered stretches follow at residues Asp118 to Ala301, Gln330 to Gln381, Leu398 to Gln428, and Asn483 to Thr524. Over residues Asn122 to Asn210 the composition is skewed to low complexity. The stretch at Asn167–Asn194 forms a coiled coil. Over residues Lys211–Glu225 the composition is skewed to polar residues. The span at Asn226 to Asn264 shows a compositional bias: low complexity. Residues Gln265–Glu300 show a composition bias toward polar residues. Low complexity-rich tracts occupy residues Gln330–Gln374, Gln419–Gln428, and Asn483–Asn517. Residues Gln419–Leu486 are a coiled coil.

It belongs to the Mediator complex subunit 29 family. In terms of assembly, component of the Mediator complex.

It is found in the nucleus. Component of the Mediator complex, a coactivator involved in the regulated transcription of nearly all RNA polymerase II-dependent genes. Mediator functions as a bridge to convey information from gene-specific regulatory proteins to the basal RNA polymerase II transcription machinery. Mediator is recruited to promoters by direct interactions with regulatory proteins and serves as a scaffold for the assembly of a functional preinitiation complex with RNA polymerase II and the general transcription factors. This is Putative mediator of RNA polymerase II transcription subunit 29 (med29) from Dictyostelium discoideum (Social amoeba).